Consider the following 115-residue polypeptide: Con-Ins T1A (115 aa).

Residues 1–24 (MTTSFYFLLMALGLLLYVCQSSFG) form the signal peptide. Residues 25–29 (NQHTR) constitute a propeptide that is removed on maturation. The residue at position 34 (P34) is a 4-hydroxyproline; partial. 3 cysteine pairs are disulfide-bonded: C38–C101, C50–C114, and C100–C105. E41 bears the 4-carboxyglutamate mark. A propeptide spans 53–94 (KRNDAGKKRGRASPLWQRGGSLSMLKARAKRNEAFHLQRAHR) (c peptide). A 4-carboxyglutamate modification is found at E98. At P104 the chain carries 4-hydroxyproline; partial. E109 carries the 4-carboxyglutamate; partial modification. C114 carries the post-translational modification Cysteine amide.

It belongs to the insulin family. Heterodimer of A and B chains; disulfide-linked. In terms of tissue distribution, expressed by the venom gland.

It is found in the secreted. Its function is as follows. This venom insulin, from a fish-hunting cone snail, facilitates prey capture by rapidly inducing hypoglycemic shock. It is one of the smallest known insulin found in nature and lacks the C-terminal segment of the B chain that, in human insulin, mediates engagement of the insulin receptor (INSR) and assembly of the hormone's hexameric storage form. Despite lacking this segment, it both binds and activates human insulin receptor (long isoform (HIR-B)) with a high potency (EC(50)=12.0 nM). In vivo, intraperitoneal injection of this peptide into zebrafish lowers blood glucose with a lower potency than human insulin. In addition, when applied to water, this peptide reduces overall locomotor activity of zebrafish larvae, observed as a significant decrease in the percentage of time spent swimming and movement frequency. When tested on a mouse model of diabetes, this insulin also lowers blood glucose with a 10-fold lower potency than human insulin. This Conus tulipa (Fish-hunting cone snail) protein is Con-Ins T1A.